Here is a 2172-residue protein sequence, read N- to C-terminus: Non-reducing polyketide synthase dpfgA (2172 aa).

The N-terminal acylcarrier protein transacylase domain (SAT) stretch occupies residues 74–181 (EWIKCGNSSL…LALCVGALVD (108 aa)). The 395-residue stretch at 389-783 (DDSIAIIGVS…GTNAAMLVCQ (395 aa)) folds into the Ketosynthase family 3 (KS3) domain. Residues Cys529, His665, and His706 each act as for beta-ketoacyl synthase activity in the active site. Residues 895-1197 (VFAGQTGRQA…SFHSILLQGQ (303 aa)) are malonyl-CoA:ACP transacylase (MAT) domain. Ser981 functions as the For acyl/malonyl transferase activity in the catalytic mechanism. Residues 1270-1403 (PELVSLAGPT…GTINWQGQGC (134 aa)) are N-terminal hotdog fold. The PKS/mFAS DH domain occupies 1270–1581 (PELVSLAGPT…LKRIPIRSLQ (312 aa)). Positions 1277–1575 (GPTDGETVEF…EIIGASLKRI (299 aa)) are product template (PT) domain. The interval 1428–1581 (SASTVQGLFV…LKRIPIRSLQ (154 aa)) is C-terminal hotdog fold. Disordered regions lie at residues 1608–1631 (DSDSDLPDSEANSPRVGSDLHADF) and 1650–1672 (YPMDSSSFSSAQPPSSASSVLSD). Over residues 1650 to 1668 (YPMDSSSFSSAQPPSSASS) the composition is skewed to low complexity. Positions 1671–1747 (SDHDQESTAL…DLYRMVLNHD (77 aa)) constitute a Carrier domain. The residue at position 1707 (Ser1707) is an O-(pantetheine 4'-phosphoryl)serine. The disordered stretch occupies residues 1751–1773 (DRGSTVLSDKAPKSKSDSSLHGQ). The interval 1975–2155 (EFLHRVLSRL…DAGFIHVDWT (181 aa)) is methyltransferase (CMeT) domain.

It participates in secondary metabolite biosynthesis; terpenoid biosynthesis. Non-reducing polyketide synthase; part of the gene cluster that mediates the biosynthesis of diterpenoid pyrones. The first step of the pathway is the synthesis of the alpha-pyrone moiety by the polyketide synthase dpfgA via condensation of one acetyl-CoA starter unit with 3 malonyl-CoA units and 2 methylations. The alpha-pyrone is then combined with geranylgeranyl pyrophosphate (GGPP) formed by the GGPP synthase dpfgD through the action of the prenyltransferase dpfgC to yield a linear alpha-pyrone diterpenoid. Subsequent steps in the diterpenoid pyrone biosynthetic pathway involve the decalin core formation, which is initiated by the epoxidation of the C10-C11 olefin by the FAD-dependent oxidoreductase dpfgE, and is followed by a cyclization cascade catalyzed by the terpene cyclase dpfgB. The short chain dehydrogenase/reductase dpfgG then oxidizes the 8S hydroxy group to a ketone and the short chain dehydrogenase/reductase dpfgH reduces the ketone to the 8R hydroxy group to yield higginsianin B. Higginsianin B is further methylated by the methyltransferase dpfgI to produce the intermediate named FDDP B. The cytochrome P450 monooxygenase dfgpJ then catalyzes a three-step oxidation at C-27 to generate a carboxylic acid as well as C-26 hydroxylation. Finally, methyltransferase dpfgK methylates the carboxylic acid generated by dpfgJ, yielding the final diterpenoid pyrones from the pathway which were named FDDP D and FDDP E. This is Non-reducing polyketide synthase dpfgA from Gibberella zeae (strain ATCC MYA-4620 / CBS 123657 / FGSC 9075 / NRRL 31084 / PH-1) (Wheat head blight fungus).